We begin with the raw amino-acid sequence, 595 residues long: Aspartate--tRNA(Asp/Asn) ligase (595 aa).

Glu174 provides a ligand contact to L-aspartate. An aspartate region spans residues 198 to 201 (QLFK). Arg220 provides a ligand contact to L-aspartate. Residues 220–222 (RDE) and Gln229 each bind ATP. His456 provides a ligand contact to L-aspartate. Glu486 provides a ligand contact to ATP. Residue Arg493 participates in L-aspartate binding. 538–541 (GFDR) lines the ATP pocket.

The protein belongs to the class-II aminoacyl-tRNA synthetase family. Type 1 subfamily. Homodimer.

The protein resides in the cytoplasm. It carries out the reaction tRNA(Asx) + L-aspartate + ATP = L-aspartyl-tRNA(Asx) + AMP + diphosphate. In terms of biological role, aspartyl-tRNA synthetase with relaxed tRNA specificity since it is able to aspartylate not only its cognate tRNA(Asp) but also tRNA(Asn). Reaction proceeds in two steps: L-aspartate is first activated by ATP to form Asp-AMP and then transferred to the acceptor end of tRNA(Asp/Asn). The sequence is that of Aspartate--tRNA(Asp/Asn) ligase from Gloeobacter violaceus (strain ATCC 29082 / PCC 7421).